The sequence spans 252 residues: 3-dehydroquinate dehydratase (252 aa).

3-dehydroquinate-binding positions include serine 21, 46–48 (EWR), and arginine 82. Histidine 143 acts as the Proton donor/acceptor in catalysis. Lysine 170 functions as the Schiff-base intermediate with substrate in the catalytic mechanism. 3-dehydroquinate contacts are provided by arginine 213, serine 232, and glutamine 236.

It belongs to the type-I 3-dehydroquinase family. In terms of assembly, homodimer.

It catalyses the reaction 3-dehydroquinate = 3-dehydroshikimate + H2O. It functions in the pathway metabolic intermediate biosynthesis; chorismate biosynthesis; chorismate from D-erythrose 4-phosphate and phosphoenolpyruvate: step 3/7. Its function is as follows. Involved in the third step of the chorismate pathway, which leads to the biosynthesis of aromatic amino acids. Catalyzes the cis-dehydration of 3-dehydroquinate (DHQ) and introduces the first double bond of the aromatic ring to yield 3-dehydroshikimate. The sequence is that of 3-dehydroquinate dehydratase from Escherichia coli O139:H28 (strain E24377A / ETEC).